Here is a 475-residue protein sequence, read N- to C-terminus: Transcription factor EB (475 aa).

The disordered stretch occupies residues 1–52 (MASRIGLRMQLMREQAQQEEQRERMQQQAVMHYMQQQQQQQQQLGGPPTPAI). Residues 1-166 (MASRIGLRMQ…DDVIDNIMRL (166 aa)) form an interaction with ACSS2 region. Residues 26–43 (QQQAVMHYMQQQQQQQQQ) are compositionally biased toward low complexity. Phosphoserine is present on residues Ser108, Ser113, Ser121, and Ser137. A Nuclear export signal motif is present at residues 135–152 (GNSAPNSPMAMLHISSNP). Residue Ser141 is modified to Phosphoserine; by MTOR. Positions 155–164 (EFDDVIDNIM) are strong transcription activation domain. Thr182 bears the Phosphothreonine mark. A Phosphoserine; by MTOR modification is found at Ser210. At Cys211 the chain carries S-(2,3-dicarboxypropyl)cysteine. A bHLH domain is found at 234–287 (QKKDNHNLIERRRRFNINDRIKELGMLIPKANDLDVRWNKGTILKASVDYIRRM). The Nuclear localization signal signature appears at 244–247 (RRRR). Residues 297 to 318 (LENHSRRLEMTNKQLWLRIQEL) are leucine-zipper. Ser331 is modified (phosphoserine). The segment at 351–429 (SEDGPGEALM…HGSPFPNLSK (79 aa)) is disordered. Positions 380-389 (LPSAAQPQSP) are enriched in low complexity. Residues Ser422, Ser440, Ser465, Ser466, and Ser468 each carry the phosphoserine modification. Over residues 445–468 (ASDPLFSTMSPEASKASSRRSSFS) the composition is skewed to low complexity. Residues 445 to 475 (ASDPLFSTMSPEASKASSRRSSFSMEEGDVL) form a disordered region.

This sequence belongs to the MiT/TFE family. In terms of assembly, homodimer and heterodimer; with TFE3 or MITF. Interacts (when phosphorylated by MTOR) with YWHAZ; promoting retention in the cytosol. Interacts with Irgm1; promoting association between TFEB and PPP3CB and dephosphorylation. Interacts with small GTPases Rag (RagA/RRAGA, RagB/RRAGB, RagC/RRAGC and/or RagD/RRAGD); promoting its recruitment to lysosomal membrane in the presence of nutrients. Interacts with ACSS2. Post-translationally, phosphorylation at Ser-210 by MTOR via non-canonical mTORC1 pathway regulates its subcellular location and activity. When nutrients are present, phosphorylation by MTOR promotes association with 14-3-3/YWHA adapters and retention in the cytosol. Inhibition of mTORC1, starvation and lysosomal disruption, promotes dephosphorylation by calcineurin PPP3CB and translocation to the nucleus. Dephosphorylated by calcineurin PPP3CB in response to lysosomal Ca(2+) release. Irgm1 promotes dephosphorylation by calcineurin PPP3CB, resulting in TFEB nuclear translocation and stimulation of lysosomal biogenesis. Exported from the nucleus in a mTORC1-dependent manner in response to nutrient availability. Alkylated via a non-enzymatic covalent modification. Itaconate, an anti-inflammatory metabolite generated in response to lipopolysaccharide, alkylates Cys-211, preventing association with 14-3-3/YWHA adapters, thereby promoting nuclear translocation and activity. In terms of processing, sumoylated; does not affect dimerization with MITF. In terms of tissue distribution, widely expressed.

The protein resides in the nucleus. It is found in the cytoplasm. Its subcellular location is the cytosol. The protein localises to the lysosome membrane. Functionally, transcription factor that acts as a master regulator of lysosomal biogenesis, autophagy, lysosomal exocytosis, lipid catabolism, energy metabolism and immune response. Specifically recognizes and binds E-box sequences (5'-CANNTG-3'); efficient DNA-binding requires dimerization with itself or with another MiT/TFE family member such as TFE3 or MITF. Involved in the cellular response to amino acid availability by acting downstream of MTOR: in the presence of nutrients, TFEB phosphorylation by MTOR promotes its cytosolic retention and subsequent inactivation. Upon starvation or lysosomal stress, inhibition of MTOR induces TFEB dephosphorylation, resulting in nuclear localization and transcription factor activity. Specifically recognizes and binds the CLEAR-box sequence (5'-GTCACGTGAC-3') present in the regulatory region of many lysosomal genes, leading to activate their expression, thereby playing a central role in expression of lysosomal genes. Regulates lysosomal positioning in response to nutrient deprivation by promoting the expression of PIP4P1. Acts as a positive regulator of autophagy by promoting expression of genes involved in autophagy. In association with TFE3, activates the expression of CD40L in T-cells, thereby playing a role in T-cell-dependent antibody responses in activated CD4(+) T-cells and thymus-dependent humoral immunity. Specifically recognizes the gamma-E3 box, a subset of E-boxes, present in the heavy-chain immunoglobulin enhancer. Plays a role in the signal transduction processes required for normal vascularization of the placenta. Involved in the immune response to infection by the bacteria S.aureus, S.typhimurium or S.enterica. Infection promotes itaconate production, leading to alkylation, resulting in nuclear localization and transcription factor activity. Itaconate-mediated alkylation activates TFEB-dependent lysosomal biogenesis, facilitating the bacteria clearance during the antibacterial innate immune response. In association with ACSS2, promotes the expression of genes involved in lysosome biogenesis and both autophagy upon glucose deprivation. This chain is Transcription factor EB, found in Mus musculus (Mouse).